Consider the following 699-residue polypeptide: eEF1A lysine and N-terminal methyltransferase (699 aa).

Position 1 is an N-acetylmethionine (Met-1). Phosphoserine is present on Ser-267. Positions 433 to 460 are disordered; that stretch reads VSHRAQKKRKKDRKKHRPADTPEDLPAA. A compositionally biased stretch (basic residues) spans 436 to 449; the sequence is RAQKKRKKDRKKHR.

It belongs to the methyltransferase superfamily. In terms of assembly, forms a tripartite complex containing GAB1, METTL13 and SPRY2. Within the complex interacts with GAB1 and SPRY2.

It localises to the cytoplasm. Its subcellular location is the nucleus. The protein localises to the mitochondrion. It catalyses the reaction L-lysyl-[protein] + S-adenosyl-L-methionine = N(6)-methyl-L-lysyl-[protein] + S-adenosyl-L-homocysteine + H(+). It carries out the reaction N(6)-methyl-L-lysyl-[protein] + S-adenosyl-L-methionine = N(6),N(6)-dimethyl-L-lysyl-[protein] + S-adenosyl-L-homocysteine + H(+). The enzyme catalyses N-terminal glycyl-L-lysyl-L-glutamyl-[protein] + 3 S-adenosyl-L-methionine = N-terminal N,N,N-trimethyl-glycyl-L-lysyl-L-glutamyl-[protein] + 3 S-adenosyl-L-homocysteine + 3 H(+). In terms of biological role, dual methyltransferase that catalyzes methylation of elongation factor 1-alpha (EEF1A1 and EEF1A2) at two different positions, and is therefore involved in the regulation of mRNA translation. Via its C-terminus, methylates EEF1A1 and EEF1A2 at the N-terminal residue 'Gly-2'. Via its N-terminus dimethylates EEF1A1 and EEF1A2 at residue 'Lys-55'. Has no activity towards core histones H2A, H2B, H3 and H4. In Bos taurus (Bovine), this protein is eEF1A lysine and N-terminal methyltransferase (METTL13).